The chain runs to 351 residues: Transmembrane and coiled-coil domain-containing protein 5B (351 aa).

Positions 17-214 (EIPKLEITKQ…WRSSIQSAKT (198 aa)) form a coiled coil. A helical transmembrane segment spans residues 292–312 (IFVVMIFFRLLGYVLFYLQYI).

Belongs to the TMCO5 family.

The protein localises to the membrane. The chain is Transmembrane and coiled-coil domain-containing protein 5B (TMCO5B) from Bos taurus (Bovine).